We begin with the raw amino-acid sequence, 349 residues long: Protein BCCIP homolog (349 aa).

A compositionally biased stretch (basic residues) spans 1–10; that stretch reads MGRVFKKKGG. Residues 1–65 form a disordered region; the sequence is MGRVFKKKGG…DDEEEDEDEQ (65 aa). The segment covering 11 to 33 has biased composition (basic and acidic residues); it reads AKREAEEEKQEELVMRKKLRKEE. The segment covering 34–65 has biased composition (acidic residues); it reads EPEPVEDVEEDEDVSDEDDEDIDDEEEDEDEQ.

Belongs to the BCP1 family.

The polypeptide is Protein BCCIP homolog (Caenorhabditis elegans).